The following is an 89-amino-acid chain: Cell division topological specificity factor (89 aa).

Belongs to the MinE family.

Prevents the cell division inhibition by proteins MinC and MinD at internal division sites while permitting inhibition at polar sites. This ensures cell division at the proper site by restricting the formation of a division septum at the midpoint of the long axis of the cell. This Desulforudis audaxviator (strain MP104C) protein is Cell division topological specificity factor.